The sequence spans 283 residues: Elongation factor Ts (283 aa).

Residues 79-82 (TDFV) form an involved in Mg(2+) ion dislocation from EF-Tu region.

The protein belongs to the EF-Ts family.

The protein localises to the cytoplasm. Associates with the EF-Tu.GDP complex and induces the exchange of GDP to GTP. It remains bound to the aminoacyl-tRNA.EF-Tu.GTP complex up to the GTP hydrolysis stage on the ribosome. The protein is Elongation factor Ts of Pseudoalteromonas translucida (strain TAC 125).